Consider the following 149-residue polypeptide: Transcriptional regulator MraZ (149 aa).

2 consecutive SpoVT-AbrB domains span residues 6–52 (RSYR…TPED) and 81–124 (VEEL…SEEE).

This sequence belongs to the MraZ family. Forms oligomers.

The protein resides in the cytoplasm. The protein localises to the nucleoid. The polypeptide is Transcriptional regulator MraZ (Oleidesulfovibrio alaskensis (strain ATCC BAA-1058 / DSM 17464 / G20) (Desulfovibrio alaskensis)).